We begin with the raw amino-acid sequence, 87 residues long: UPF0367 protein Syncc9902_0316 (87 aa).

Belongs to the UPF0367 family.

This is UPF0367 protein Syncc9902_0316 from Synechococcus sp. (strain CC9902).